We begin with the raw amino-acid sequence, 94 residues long: Co-chaperonin GroES (94 aa).

The protein belongs to the GroES chaperonin family. Heptamer of 7 subunits arranged in a ring. Interacts with the chaperonin GroEL.

The protein resides in the cytoplasm. Its function is as follows. Together with the chaperonin GroEL, plays an essential role in assisting protein folding. The GroEL-GroES system forms a nano-cage that allows encapsulation of the non-native substrate proteins and provides a physical environment optimized to promote and accelerate protein folding. GroES binds to the apical surface of the GroEL ring, thereby capping the opening of the GroEL channel. This is Co-chaperonin GroES from Clostridium botulinum (strain Alaska E43 / Type E3).